A 261-amino-acid polypeptide reads, in one-letter code: Triosephosphate isomerase (261 aa).

Substrate is bound at residue asparagine 10–lysine 12. Histidine 100 (electrophile) is an active-site residue. The active-site Proton acceptor is glutamate 172. Substrate is bound by residues glycine 178, serine 218, and glycine 239–glycine 240.

Belongs to the triosephosphate isomerase family. In terms of assembly, homodimer.

The protein localises to the cytoplasm. The catalysed reaction is D-glyceraldehyde 3-phosphate = dihydroxyacetone phosphate. Its pathway is carbohydrate biosynthesis; gluconeogenesis. The protein operates within carbohydrate degradation; glycolysis; D-glyceraldehyde 3-phosphate from glycerone phosphate: step 1/1. Involved in the gluconeogenesis. Catalyzes stereospecifically the conversion of dihydroxyacetone phosphate (DHAP) to D-glyceraldehyde-3-phosphate (G3P). This chain is Triosephosphate isomerase, found in Mycobacteroides abscessus (strain ATCC 19977 / DSM 44196 / CCUG 20993 / CIP 104536 / JCM 13569 / NCTC 13031 / TMC 1543 / L948) (Mycobacterium abscessus).